The chain runs to 321 residues: Mas-related G-protein coupled receptor member D (321 aa).

The Extracellular portion of the chain corresponds to 1 to 33; it reads MNQTLNSSGTVESALNYSRGSTVHTAYLVLSSL. N-linked (GlcNAc...) asparagine glycans are attached at residues asparagine 2, asparagine 6, and asparagine 16. Residues 34–54 traverse the membrane as a helical segment; sequence AMFTCLCGMAGNSMVIWLLGF. Over 55–59 the chain is Cytoplasmic; sequence RMHRN. Residues 60–80 traverse the membrane as a helical segment; that stretch reads PFCIYILNLAAADLLFLFSMA. The Extracellular portion of the chain corresponds to 81–112; the sequence is STLSLETQPLVNTTDKVHELMKRLMYFAYTVG. A glycan (N-linked (GlcNAc...) asparagine) is linked at asparagine 92. A helical membrane pass occupies residues 113 to 133; sequence LSLLTAISTQRCLSVLFPIWF. Over 134–142 the chain is Cytoplasmic; it reads KCHRPRHLS. A helical membrane pass occupies residues 143 to 163; the sequence is AWVCGLLWTLCLLMNGLTSSF. The Extracellular portion of the chain corresponds to 164–184; that stretch reads CSKFLKFNEDRCFRVDMVQAA. Residues 185–205 traverse the membrane as a helical segment; that stretch reads LIMGVLTPVMTLSSLTLFVWV. At 206–218 the chain is on the cytoplasmic side; the sequence is RRSSQQWRRQPTR. Residues 219–239 traverse the membrane as a helical segment; it reads LFVVVLASVLVFLICSLPLSI. At 240-257 the chain is on the extracellular side; the sequence is YWFVLYWLSLPPEMQVLC. A helical membrane pass occupies residues 258–280; it reads FSLSRLSSSVSSSANPVIYFLVG. The Cytoplasmic portion of the chain corresponds to 281-321; it reads SRRSHRLPTRSLGTVLQQALREEPELEGGETPTVGTNEMGA. Residues 302 to 321 form a disordered region; sequence EEPELEGGETPTVGTNEMGA.

It belongs to the G-protein coupled receptor 1 family. Mas subfamily.

It localises to the cell membrane. Functionally, may regulate nociceptor function and/or development, including the sensation or modulation of pain. Functions as a specific membrane receptor for beta-alanine. Beta-alanine at micromolar doses specifically evoked Ca(2+) influx in cells expressing the receptor. Beta-alanine decreases forskolin-stimulated cAMP production in cells expressing the receptor, suggesting that the receptor couples with G-protein G(q) and G(i). The sequence is that of Mas-related G-protein coupled receptor member D (MRGPRD) from Homo sapiens (Human).